A 197-amino-acid chain; its full sequence is Probable chorismate pyruvate-lyase (197 aa).

Residues Arg-77, Leu-115, and Glu-176 each contribute to the substrate site.

It belongs to the UbiC family.

It localises to the cytoplasm. It catalyses the reaction chorismate = 4-hydroxybenzoate + pyruvate. It functions in the pathway cofactor biosynthesis; ubiquinone biosynthesis. Its function is as follows. Removes the pyruvyl group from chorismate, with concomitant aromatization of the ring, to provide 4-hydroxybenzoate (4HB) for the ubiquinone pathway. This is Probable chorismate pyruvate-lyase from Burkholderia ambifaria (strain ATCC BAA-244 / DSM 16087 / CCUG 44356 / LMG 19182 / AMMD) (Burkholderia cepacia (strain AMMD)).